Reading from the N-terminus, the 389-residue chain is Succinate--CoA ligase [ADP-forming] subunit beta (389 aa).

An ATP-grasp domain is found at 9 to 244 (KQLLAEYGIP…KTQEDETEVT (236 aa)). Residues lysine 46, 53–55 (GRG), glycine 102, and glutamate 107 each bind ATP. The Mg(2+) site is built by asparagine 199 and aspartate 213. Substrate contacts are provided by residues asparagine 264 and 321–323 (GIV).

This sequence belongs to the succinate/malate CoA ligase beta subunit family. In terms of assembly, heterotetramer of two alpha and two beta subunits. Requires Mg(2+) as cofactor.

It catalyses the reaction succinate + ATP + CoA = succinyl-CoA + ADP + phosphate. The enzyme catalyses GTP + succinate + CoA = succinyl-CoA + GDP + phosphate. It participates in carbohydrate metabolism; tricarboxylic acid cycle; succinate from succinyl-CoA (ligase route): step 1/1. In terms of biological role, succinyl-CoA synthetase functions in the citric acid cycle (TCA), coupling the hydrolysis of succinyl-CoA to the synthesis of either ATP or GTP and thus represents the only step of substrate-level phosphorylation in the TCA. The beta subunit provides nucleotide specificity of the enzyme and binds the substrate succinate, while the binding sites for coenzyme A and phosphate are found in the alpha subunit. This Xanthomonas axonopodis pv. citri (strain 306) protein is Succinate--CoA ligase [ADP-forming] subunit beta.